Here is a 550-residue protein sequence, read N- to C-terminus: Hydroxylamine reductase (550 aa).

Positions 3, 6, 18, and 25 each coordinate [2Fe-2S] cluster. Positions 249, 273, 317, 405, 433, 458, 492, and 494 each coordinate hybrid [4Fe-2O-2S] cluster. Cys405 carries the cysteine persulfide modification.

This sequence belongs to the HCP family. It depends on [2Fe-2S] cluster as a cofactor. The cofactor is hybrid [4Fe-2O-2S] cluster.

The protein localises to the cytoplasm. It catalyses the reaction A + NH4(+) + H2O = hydroxylamine + AH2 + H(+). Catalyzes the reduction of hydroxylamine to form NH(3) and H(2)O. This chain is Hydroxylamine reductase, found in Proteus mirabilis (strain HI4320).